A 1689-amino-acid polypeptide reads, in one-letter code: DNA-directed RNA polymerase I subunit rpa1 (1689 aa).

Residues C63, C66, C73, and H76 each coordinate Zn(2+). Phosphoserine occurs at positions 159 and 161. The span at 269–280 (VLRDTSKKHHED) shows a compositional bias: basic and acidic residues. Positions 269 to 295 (VLRDTSKKHHEDEGYDGDSDSSNESEV) are disordered. Positions 281–295 (EGYDGDSDSSNESEV) are enriched in acidic residues. Mg(2+) contacts are provided by D643, D645, and D647. Residues 1005-1017 (PQEYYFHCMAGRE) form a bridging helix region. The interval 1346-1440 (RKSGGKDDTV…EEDEGFKSDE (95 aa)) is disordered. Phosphoserine occurs at positions 1438 and 1441.

Belongs to the RNA polymerase beta' chain family. Component of the RNA polymerase I (Pol I) complex consisting of at least 13 subunits.

It is found in the nucleus. The protein localises to the nucleolus. The enzyme catalyses RNA(n) + a ribonucleoside 5'-triphosphate = RNA(n+1) + diphosphate. In terms of biological role, DNA-dependent RNA polymerase catalyzes the transcription of DNA into RNA using the four ribonucleoside triphosphates as substrates. Largest and catalytic core component of RNA polymerase I which synthesizes ribosomal RNA precursors. Forms the polymerase active center together with the second largest subunit. A single stranded DNA template strand of the promoter is positioned within the central active site cleft of Pol I. A bridging helix emanates from RPA1 and crosses the cleft near the catalytic site and is thought to promote translocation of Pol I by acting as a ratchet that moves the RNA-DNA hybrid through the active site by switching from straight to bent conformations at each step of nucleotide addition. The chain is DNA-directed RNA polymerase I subunit rpa1 (rpa1) from Schizosaccharomyces pombe (strain 972 / ATCC 24843) (Fission yeast).